A 425-amino-acid chain; its full sequence is 2-oxoglutarate and iron-dependent oxygenase JMJD4 homolog (425 aa).

Residues 165–316 enclose the JmjC domain; sequence AAQMPGYNFY…MVWQNLKNNL (152 aa). Fe cation is bound by residues histidine 212, aspartate 214, and histidine 284.

This sequence belongs to the JMJD6 family. Fe(2+) serves as cofactor.

Its subcellular location is the nucleus. It localises to the cytoplasm. The enzyme catalyses L-lysyl-[protein] + 2-oxoglutarate + O2 = 4-hydroxy-L-lysyl-[protein] + succinate + CO2. Catalyzes the 2-oxoglutarate and iron-dependent C4-lysyl hydroxylation of eRF1 thereby promoting the translational termination efficiency of eRF1. May be involved in regulation of chromatin structure, promoting expansion of heterochromatin. This is 2-oxoglutarate and iron-dependent oxygenase JMJD4 homolog from Drosophila melanogaster (Fruit fly).